The primary structure comprises 101 residues: Replication restart protein PriB (101 aa).

The SSB domain maps to 1 to 101; the sequence is MTTNNLVLSG…IHAENVELKT (101 aa).

Belongs to the PriB family. Homodimer. Interacts with PriA and DnaT. Component of the replication restart primosome. Primosome assembly occurs via a 'hand-off' mechanism. PriA binds to replication forks, subsequently PriB then DnaT bind; DnaT then displaces ssDNA to generate the helicase loading substrate.

In terms of biological role, involved in the restart of stalled replication forks, which reloads the replicative helicase on sites other than the origin of replication; the PriA-PriB pathway is the major replication restart pathway. During primosome assembly it facilitates complex formation between PriA and DnaT on DNA; stabilizes PriA on DNA. Stimulates the DNA unwinding activity of PriA helicase. The chain is Replication restart protein PriB from Shewanella baltica (strain OS223).